Here is a 182-residue protein sequence, read N- to C-terminus: Adenine phosphoribosyltransferase (182 aa).

Belongs to the purine/pyrimidine phosphoribosyltransferase family. Homodimer.

The protein resides in the cytoplasm. The catalysed reaction is AMP + diphosphate = 5-phospho-alpha-D-ribose 1-diphosphate + adenine. It participates in purine metabolism; AMP biosynthesis via salvage pathway; AMP from adenine: step 1/1. Its function is as follows. Catalyzes a salvage reaction resulting in the formation of AMP, that is energically less costly than de novo synthesis. The protein is Adenine phosphoribosyltransferase of Pseudomonas fluorescens (strain SBW25).